Consider the following 480-residue polypeptide: Plant UBX domain-containing protein 10 (480 aa).

Disordered regions lie at residues 47–78 and 335–383; these read DASSSAVDGGGNNRDHDHNNATVTPDYPPRGI and ADQA…AARV. Residues 330–389 adopt a coiled-coil conformation; sequence RAALEADQAREQQRQEEKERLEREAAEAERKLKEEEEARERAAREAEERQAARVRMRQEK. The span at 336-383 shows a compositional bias: basic and acidic residues; sequence DQAREQQRQEEKERLEREAAEAERKLKEEEEARERAAREAEERQAARV. A UBX domain is found at 399 to 477; sequence KGPDVTQVLV…GLHPQASLFI (79 aa).

The chain is Plant UBX domain-containing protein 10 from Arabidopsis thaliana (Mouse-ear cress).